Consider the following 482-residue polypeptide: Cardiolipin synthase (482 aa).

A run of 2 helical transmembrane segments spans residues 4 to 24 (LAYL…VTVF) and 34 to 54 (WAWL…YLIF). PLD phosphodiesterase domains lie at 217 to 244 (LNYR…GDEY) and 395 to 422 (DNGF…DFRS). Active-site residues include H222, K224, D229, H400, K402, and D407.

Belongs to the phospholipase D family. Cardiolipin synthase subfamily.

It is found in the cell membrane. The catalysed reaction is 2 a 1,2-diacyl-sn-glycero-3-phospho-(1'-sn-glycerol) = a cardiolipin + glycerol. In terms of biological role, catalyzes the reversible phosphatidyl group transfer from one phosphatidylglycerol molecule to another to form cardiolipin (CL) (diphosphatidylglycerol) and glycerol. The protein is Cardiolipin synthase (cls) of Listeria monocytogenes serotype 4a (strain HCC23).